We begin with the raw amino-acid sequence, 496 residues long: Glutamyl-tRNA(Gln) amidotransferase subunit A (496 aa).

Active-site charge relay system residues include K79 and S159. S183 (acyl-ester intermediate) is an active-site residue.

It belongs to the amidase family. GatA subfamily. As to quaternary structure, heterotrimer of A, B and C subunits.

The catalysed reaction is L-glutamyl-tRNA(Gln) + L-glutamine + ATP + H2O = L-glutaminyl-tRNA(Gln) + L-glutamate + ADP + phosphate + H(+). Allows the formation of correctly charged Gln-tRNA(Gln) through the transamidation of misacylated Glu-tRNA(Gln) in organisms which lack glutaminyl-tRNA synthetase. The reaction takes place in the presence of glutamine and ATP through an activated gamma-phospho-Glu-tRNA(Gln). This chain is Glutamyl-tRNA(Gln) amidotransferase subunit A, found in Ruegeria pomeroyi (strain ATCC 700808 / DSM 15171 / DSS-3) (Silicibacter pomeroyi).